The following is a 252-amino-acid chain: Transmembrane ascorbate-dependent reductase CYB561 (252 aa).

M1 bears the N-acetylmethionine mark. The Cytoplasmic segment spans residues 1–17; the sequence is MEGPASPARAPGALPYY. The helical transmembrane segment at 18–38 threads the bilayer; the sequence is VAFSQLLGLIVVAMTGAWLGM. The 202-residue stretch at 20–221 folds into the Cytochrome b561 domain; that stretch reads FSQLLGLIVV…FATVILYILT (202 aa). The Vesicular portion of the chain corresponds to 39–52; that stretch reads YRGGIAWESALQFN. A helical membrane pass occupies residues 53 to 73; sequence VHPLCMIIGLVFLQGDALLVY. Residues H54, R74, and K81 each coordinate heme b. Topologically, residues 74–86 are cytoplasmic; that stretch reads RVFRNEAKRTTKV. K81 and K85 together coordinate L-ascorbate. A helical membrane pass occupies residues 87 to 107; the sequence is LHGLLHVFAFVIALVGLVAVF. Heme b is bound by residues H88, 117-120, and H122; that span reads DLYS. The Vesicular portion of the chain corresponds to 108–125; it reads EHHRKKGYADLYSLHSWC. The chain crosses the membrane as a helical span at residues 126 to 146; the sequence is GILVFALFFAQWLVGFSFFLF. The Cytoplasmic segment spans residues 147–159; that stretch reads PGASFSLRSRYRP. R154 contacts L-ascorbate. The chain crosses the membrane as a helical span at residues 160–180; that stretch reads QHVFFGAAIFLLSVATALLGL. Heme b-binding residues include H161 and E182. At 181-199 the chain is on the vesicular side; it reads KEALLFELGTKYSMFEPEG. The helical transmembrane segment at 200 to 220 threads the bilayer; sequence VLANVLGLLLATFATVILYIL. Residues 221 to 252 lie on the Cytoplasmic side of the membrane; that stretch reads TRADWKRPLQAEEQALSMDFKTLTEGDSPSSQ. Position 226 (K226) interacts with heme b. Phosphoserine occurs at positions 248 and 250.

It depends on heme b as a cofactor. In terms of tissue distribution, expressed in the adrenal medulla and all brain regions, but not in visceral organs.

Its subcellular location is the cytoplasmic vesicle. The protein localises to the secretory vesicle. It is found in the chromaffin granule membrane. The catalysed reaction is monodehydro-L-ascorbate radical(out) + L-ascorbate(in) = monodehydro-L-ascorbate radical(in) + L-ascorbate(out). Its function is as follows. Transmembrane reductase that uses ascorbate as an electron donor in the cytoplasm and transfers electrons across membranes to reduce monodehydro-L-ascorbate radical in the lumen of secretory vesicles. It is therefore involved the regeneration and homeostasis within secretory vesicles of ascorbate which in turn provides reducing equivalents needed to support the activity of intravesicular enzymes. This Bos taurus (Bovine) protein is Transmembrane ascorbate-dependent reductase CYB561 (CYB561).